A 323-amino-acid chain; its full sequence is Peroxidase 16 (323 aa).

A signal peptide spans 1–23; the sequence is MKNQSSFSIVALLLIFFSSSVFA. 4 cysteine pairs are disulfide-bonded: cysteine 34–cysteine 113, cysteine 67–cysteine 72, cysteine 119–cysteine 319, and cysteine 198–cysteine 230. The active-site Proton acceptor is histidine 65. Ca(2+)-binding residues include aspartate 66, valine 69, glycine 71, aspartate 73, and serine 75. Residue proline 161 coordinates substrate. Histidine 191 lines the heme b pocket. Position 192 (threonine 192) interacts with Ca(2+). Residues aspartate 243, serine 246, and aspartate 251 each contribute to the Ca(2+) site.

It belongs to the peroxidase family. Classical plant (class III) peroxidase subfamily. Requires heme b as cofactor. The cofactor is Ca(2+). Expressed in the whole plant, but preferentially in roots and leaves.

The protein resides in the secreted. It catalyses the reaction 2 a phenolic donor + H2O2 = 2 a phenolic radical donor + 2 H2O. Its function is as follows. Removal of H(2)O(2), oxidation of toxic reductants, biosynthesis and degradation of lignin, suberization, auxin catabolism, response to environmental stresses such as wounding, pathogen attack and oxidative stress. These functions might be dependent on each isozyme/isoform in each plant tissue. The protein is Peroxidase 16 (PER16) of Arabidopsis thaliana (Mouse-ear cress).